A 219-amino-acid polypeptide reads, in one-letter code: MAFLLHQARFYTTVNHLRDLPPTVQPEIAFAGRSNAGKSTAINVLCNQKRLAFASKTPGRTQHINYFSVGPAAEPVANLVDLPGYGYAEVPGAAKAHWEMLLSSYLATRSQLCGLILMMDSRRPLTDLDRRMIEWFVPTGKPIHTLLTKCDKLTRQESINALRNTQKGLDAYRDQGVKGKLTVQLFSALKRTGLDEAHELIESWLRPSVADEKSEPVAQ.

The 184-residue stretch at 24–207 folds into the EngB-type G domain; that stretch reads VQPEIAFAGR…HELIESWLRP (184 aa). GTP-binding positions include 32–39, 59–63, 81–84, 148–151, and 186–188; these read GRSNAGKS, GRTQH, DLPG, TKCD, and FSA. Mg(2+)-binding residues include Ser-39 and Thr-61.

It belongs to the TRAFAC class TrmE-Era-EngA-EngB-Septin-like GTPase superfamily. EngB GTPase family. Mg(2+) serves as cofactor.

Necessary for normal cell division and for the maintenance of normal septation. This Burkholderia ambifaria (strain ATCC BAA-244 / DSM 16087 / CCUG 44356 / LMG 19182 / AMMD) (Burkholderia cepacia (strain AMMD)) protein is Probable GTP-binding protein EngB.